A 213-amino-acid polypeptide reads, in one-letter code: Peptidyl-prolyl cis-trans isomerase B (213 aa).

Residues 1-23 (MAVLRVLCGLLLVSILFLGFVLS) form the signal peptide. The region spanning 35–197 (FFDIEVDEQP…KSVKIANCGH (163 aa)) is the PPIase cyclophilin-type domain. A Prevents secretion from ER motif is present at residues 210 to 213 (DAAE).

It belongs to the cyclophilin-type PPIase family. PPIase B subfamily.

The protein localises to the endoplasmic reticulum lumen. The enzyme catalyses [protein]-peptidylproline (omega=180) = [protein]-peptidylproline (omega=0). With respect to regulation, inhibited by cyclosporin A (CsA). Functionally, PPIases accelerate the folding of proteins. It catalyzes the cis-trans isomerization of proline imidic peptide bonds in oligopeptides. This Schistosoma japonicum (Blood fluke) protein is Peptidyl-prolyl cis-trans isomerase B.